Consider the following 356-residue polypeptide: Holliday junction branch migration complex subunit RuvB (356 aa).

A large ATPase domain (RuvB-L) region spans residues 4–190; that stretch reads TDKLAAERII…FGIVARLEFY (187 aa). Residues Leu-29, Arg-30, Gly-71, Lys-74, Thr-75, Thr-76, 137–139, Arg-180, Tyr-190, and Arg-227 each bind ATP; that span reads EDY. Thr-75 lines the Mg(2+) pocket. Residues 191–261 are small ATPAse domain (RuvB-S); it reads DAEQLSRIVR…VADAALAMLD (71 aa). The interval 264-356 is head domain (RuvB-H); the sequence is PVGFDLMDRK…NLWDTPDAEC (93 aa). Residues Arg-300, Arg-319, and Arg-324 each coordinate DNA.

The protein belongs to the RuvB family. As to quaternary structure, homohexamer. Forms an RuvA(8)-RuvB(12)-Holliday junction (HJ) complex. HJ DNA is sandwiched between 2 RuvA tetramers; dsDNA enters through RuvA and exits via RuvB. An RuvB hexamer assembles on each DNA strand where it exits the tetramer. Each RuvB hexamer is contacted by two RuvA subunits (via domain III) on 2 adjacent RuvB subunits; this complex drives branch migration. In the full resolvosome a probable DNA-RuvA(4)-RuvB(12)-RuvC(2) complex forms which resolves the HJ.

It localises to the cytoplasm. It carries out the reaction ATP + H2O = ADP + phosphate + H(+). The RuvA-RuvB-RuvC complex processes Holliday junction (HJ) DNA during genetic recombination and DNA repair, while the RuvA-RuvB complex plays an important role in the rescue of blocked DNA replication forks via replication fork reversal (RFR). RuvA specifically binds to HJ cruciform DNA, conferring on it an open structure. The RuvB hexamer acts as an ATP-dependent pump, pulling dsDNA into and through the RuvAB complex. RuvB forms 2 homohexamers on either side of HJ DNA bound by 1 or 2 RuvA tetramers; 4 subunits per hexamer contact DNA at a time. Coordinated motions by a converter formed by DNA-disengaged RuvB subunits stimulates ATP hydrolysis and nucleotide exchange. Immobilization of the converter enables RuvB to convert the ATP-contained energy into a lever motion, pulling 2 nucleotides of DNA out of the RuvA tetramer per ATP hydrolyzed, thus driving DNA branch migration. The RuvB motors rotate together with the DNA substrate, which together with the progressing nucleotide cycle form the mechanistic basis for DNA recombination by continuous HJ branch migration. Branch migration allows RuvC to scan DNA until it finds its consensus sequence, where it cleaves and resolves cruciform DNA. This Burkholderia pseudomallei (strain 668) protein is Holliday junction branch migration complex subunit RuvB.